The sequence spans 112 residues: Hydrogenase maturation factor HypA (112 aa).

A Ni(2+)-binding site is contributed by H2. Zn(2+)-binding residues include C73, C76, C88, and C91.

Belongs to the HypA/HybF family.

Functionally, involved in the maturation of [NiFe] hydrogenases. Required for nickel insertion into the metal center of the hydrogenase. The polypeptide is Hydrogenase maturation factor HypA (Synechococcus elongatus (strain ATCC 33912 / PCC 7942 / FACHB-805) (Anacystis nidulans R2)).